Reading from the N-terminus, the 228-residue chain is Leucyl/phenylalanyl-tRNA--protein transferase (228 aa).

This sequence belongs to the L/F-transferase family.

Its subcellular location is the cytoplasm. It carries out the reaction N-terminal L-lysyl-[protein] + L-leucyl-tRNA(Leu) = N-terminal L-leucyl-L-lysyl-[protein] + tRNA(Leu) + H(+). The enzyme catalyses N-terminal L-arginyl-[protein] + L-leucyl-tRNA(Leu) = N-terminal L-leucyl-L-arginyl-[protein] + tRNA(Leu) + H(+). It catalyses the reaction L-phenylalanyl-tRNA(Phe) + an N-terminal L-alpha-aminoacyl-[protein] = an N-terminal L-phenylalanyl-L-alpha-aminoacyl-[protein] + tRNA(Phe). In terms of biological role, functions in the N-end rule pathway of protein degradation where it conjugates Leu, Phe and, less efficiently, Met from aminoacyl-tRNAs to the N-termini of proteins containing an N-terminal arginine or lysine. This is Leucyl/phenylalanyl-tRNA--protein transferase from Lawsonia intracellularis (strain PHE/MN1-00).